Reading from the N-terminus, the 383-residue chain is Probable transcriptional repressor C1348.12 (383 aa).

The segment at residues 34–60 is a DNA-binding region (zn(2)-C6 fungal-type); that stretch reads CVICRSKKQKCDGQLPCLYCKKYEYQC.

The protein resides in the nucleus. Functionally, probable transcriptional repressor of multidrug resistance genes. This chain is Probable transcriptional repressor C1348.12, found in Schizosaccharomyces pombe (strain 972 / ATCC 24843) (Fission yeast).